Consider the following 120-residue polypeptide: NAD(P)H-quinone oxidoreductase subunit 3, chloroplastic (120 aa).

The next 3 helical transmembrane spans lie at 9–29 (IFWA…FISG), 64–84 (MFAL…PWAM), and 88–108 (VLGV…ILGL).

It belongs to the complex I subunit 3 family. In terms of assembly, NDH is composed of at least 16 different subunits, 5 of which are encoded in the nucleus.

The protein localises to the plastid. Its subcellular location is the chloroplast thylakoid membrane. The enzyme catalyses a plastoquinone + NADH + (n+1) H(+)(in) = a plastoquinol + NAD(+) + n H(+)(out). The catalysed reaction is a plastoquinone + NADPH + (n+1) H(+)(in) = a plastoquinol + NADP(+) + n H(+)(out). Its function is as follows. NDH shuttles electrons from NAD(P)H:plastoquinone, via FMN and iron-sulfur (Fe-S) centers, to quinones in the photosynthetic chain and possibly in a chloroplast respiratory chain. The immediate electron acceptor for the enzyme in this species is believed to be plastoquinone. Couples the redox reaction to proton translocation, and thus conserves the redox energy in a proton gradient. The protein is NAD(P)H-quinone oxidoreductase subunit 3, chloroplastic of Barbarea verna (Land cress).